The following is a 138-amino-acid chain: MATKRLFGATRTWAGWGAWELLNPATSGRLLARDYAKKPVMKGAKSGKGAVTSEALKDPDVCTDPVQLTTYAMGVNIYKEGQDVPLKPDAEYPEWLFEMNLGPPKTLEELDPESREYWRRLRKQNIWRHNRLSKNKRL.

The transit peptide at 1–14 (MATKRLFGATRTWA) directs the protein to the mitochondrion.

Belongs to the mitochondrion-specific ribosomal protein mL54 family. In terms of assembly, component of the mitochondrial large ribosomal subunit (mt-LSU). Mature mammalian 55S mitochondrial ribosomes consist of a small (28S) and a large (39S) subunit. The 28S small subunit contains a 12S ribosomal RNA (12S mt-rRNA) and 30 different proteins. The 39S large subunit contains a 16S rRNA (16S mt-rRNA), a copy of mitochondrial valine transfer RNA (mt-tRNA(Val)), which plays an integral structural role, and 52 different proteins.

Its subcellular location is the mitochondrion. The chain is Large ribosomal subunit protein mL54 (MRPL54) from Homo sapiens (Human).